Reading from the N-terminus, the 497-residue chain is Glycerol kinase (497 aa).

Residue T12 participates in ADP binding. ATP-binding residues include T12, T13, and S14. Sn-glycerol 3-phosphate is bound at residue T12. R16 provides a ligand contact to ADP. R82, E83, Y134, and D243 together coordinate sn-glycerol 3-phosphate. Glycerol-binding residues include R82, E83, Y134, D243, and Q244. ADP is bound by residues T265 and G308. Residues T265, G308, Q312, and G409 each contribute to the ATP site. Positions 409 and 413 each coordinate ADP.

This sequence belongs to the FGGY kinase family.

The enzyme catalyses glycerol + ATP = sn-glycerol 3-phosphate + ADP + H(+). The protein operates within polyol metabolism; glycerol degradation via glycerol kinase pathway; sn-glycerol 3-phosphate from glycerol: step 1/1. With respect to regulation, inhibited by fructose 1,6-bisphosphate (FBP). Functionally, key enzyme in the regulation of glycerol uptake and metabolism. Catalyzes the phosphorylation of glycerol to yield sn-glycerol 3-phosphate. This chain is Glycerol kinase, found in Nitratidesulfovibrio vulgaris (strain DSM 19637 / Miyazaki F) (Desulfovibrio vulgaris).